Reading from the N-terminus, the 293-residue chain is Epidermal growth factor-like protein 8 (293 aa).

A signal peptide spans 1-28 (MGLWAELCISLRGLSFFLVLMTGEGTRG). An EMI domain is found at 34-112 (SLGVCSKQTL…PHPGALTCDA (79 aa)). 9 disulfides stabilise this stretch: C38–C97, C65–C71, C96–C110, C114–C124, C118–C130, C132–C141, C148–C159, C155–C168, and C170–C183. N50 is a glycosylation site (N-linked (GlcNAc...) asparagine). The EGF-like 1 domain occupies 111–142 (DAICSKPCLNGGVCTGPDRCECAPGWGGKHCH). One can recognise an EGF-like 2; calcium-binding domain in the interval 144–184 (DVDECRASLTLCSHGCLNTLGSFLCSCPHPLVLGLDGRTCA). Positions 206–235 (SEEERALRWEVAELRGRLEKLEQWATQAGA) form a coiled coil.

Ubiquitously expressed in brain, kidney, thymus and lung.

It localises to the secreted. This is Epidermal growth factor-like protein 8 (Egfl8) from Mus musculus (Mouse).